The following is a 195-amino-acid chain: Ribonuclease HII (195 aa).

Positions 1 to 195 (MICGIDEAGR…SWRTLRYLNT (195 aa)) constitute an RNase H type-2 domain. A divalent metal cation is bound by residues Asp-6, Glu-7, and Asp-101.

It belongs to the RNase HII family. It depends on Mn(2+) as a cofactor. The cofactor is Mg(2+).

Its subcellular location is the cytoplasm. It carries out the reaction Endonucleolytic cleavage to 5'-phosphomonoester.. Functionally, endonuclease that specifically degrades the RNA of RNA-DNA hybrids. The polypeptide is Ribonuclease HII (Pyrobaculum islandicum (strain DSM 4184 / JCM 9189 / GEO3)).